The sequence spans 202 residues: Coiled-coil domain-containing protein 85B (202 aa).

M1 is subject to N-acetylmethionine. 2 coiled-coil regions span residues 43–90 and 118–147; these read GRLM…ERQR and QKLA…LGEE. A disordered region spans residues 148-202; that stretch reads WGPRGGPSGAGGSGAGPAPELALPPCGPRDLGDGSSSTGSVGSPDQLPLACSPDD. Positions 150–162 are enriched in gly residues; sequence PRGGPSGAGGSGA. Positions 180–190 are enriched in low complexity; that stretch reads DGSSSTGSVGS.

Belongs to the CCDC85 family. Interacts with CEBPB. Interacts with EURL. May interact with CEBPD. Interacts with MCRS1. Interacts with TCF7L2; competes with CTNNB1. Interacts with ANKRD26. Interacts with the beta-catenin family proteins ARVCF, CTNND1, CTNND2 and PKP4. In terms of assembly, (Microbial infection) Interacts with the viral phosphoprotein hepatitis delta antigen (HDAG); this interaction affects hepatitis delta virus (HDV) genomic replication in intact cells. Widely expressed including liver.

The protein localises to the nucleus. Its subcellular location is the cytoplasm. It is found in the cytoskeleton. The protein resides in the microtubule organizing center. It localises to the centrosome. The protein localises to the cell junction. Its subcellular location is the adherens junction. Functions as a transcriptional repressor. May inhibit the activity of CTNNB1 in a TP53-dependent manner and thus regulate cell growth. May function in adipocyte differentiation, negatively regulating mitotic clonal expansion. Plays a role in cell-cell adhesion and epithelium development through its interaction with proteins of the beta-catenin family. Its function is as follows. (Microbial infection) Plays a role in hepatitis delta virus (HDV) genomic replication. The polypeptide is Coiled-coil domain-containing protein 85B (CCDC85B) (Homo sapiens (Human)).